Consider the following 93-residue polypeptide: Acylphosphatase (93 aa).

Positions 4–91 (TLHLVIHGRV…PAGTGFRVAA (88 aa)) constitute an Acylphosphatase-like domain. Catalysis depends on residues R19 and N37.

Belongs to the acylphosphatase family.

It catalyses the reaction an acyl phosphate + H2O = a carboxylate + phosphate + H(+). This chain is Acylphosphatase (acyP), found in Azorhizobium caulinodans (strain ATCC 43989 / DSM 5975 / JCM 20966 / LMG 6465 / NBRC 14845 / NCIMB 13405 / ORS 571).